Here is a 446-residue protein sequence, read N- to C-terminus: Ribosomal protein uS12 methylthiotransferase RimO (446 aa).

The 111-residue stretch at 6-116 (PNIGFISLGC…VMQQVHKYVP (111 aa)) folds into the MTTase N-terminal domain. [4Fe-4S] cluster is bound by residues C15, C51, C80, C148, C152, and C155. One can recognise a Radical SAM core domain in the interval 134-375 (LTPKHYAYLK…MQLQQEISAA (242 aa)). In terms of domain architecture, TRAM spans 378-446 (QQKVGKVFTV…AYDLYASLIN (69 aa)).

Belongs to the methylthiotransferase family. RimO subfamily. [4Fe-4S] cluster is required as a cofactor.

Its subcellular location is the cytoplasm. The enzyme catalyses L-aspartate(89)-[ribosomal protein uS12]-hydrogen + (sulfur carrier)-SH + AH2 + 2 S-adenosyl-L-methionine = 3-methylsulfanyl-L-aspartate(89)-[ribosomal protein uS12]-hydrogen + (sulfur carrier)-H + 5'-deoxyadenosine + L-methionine + A + S-adenosyl-L-homocysteine + 2 H(+). In terms of biological role, catalyzes the methylthiolation of an aspartic acid residue of ribosomal protein uS12. This chain is Ribosomal protein uS12 methylthiotransferase RimO, found in Pasteurella multocida (strain Pm70).